The following is a 102-amino-acid chain: Large ribosomal subunit protein bL21 (102 aa).

The protein belongs to the bacterial ribosomal protein bL21 family. Part of the 50S ribosomal subunit. Contacts protein L20.

Its function is as follows. This protein binds to 23S rRNA in the presence of protein L20. This chain is Large ribosomal subunit protein bL21, found in Nitratiruptor sp. (strain SB155-2).